The following is a 361-amino-acid chain: 5-exo-hydroxycamphor dehydrogenase (361 aa).

6 residues coordinate Zn(2+): Cys40, His62, Cys98, Cys101, Cys104, and Cys170.

It belongs to the zinc-containing alcohol dehydrogenase family. Zn(2+) serves as cofactor.

The catalysed reaction is (1R,4R,5R)-5-hydroxycamphor + NAD(+) = (1R,4R)-bornane-2,5-dione + NADH + H(+). Its pathway is terpene metabolism; (R)-camphor degradation. In Pseudomonas putida (Arthrobacter siderocapsulatus), this protein is 5-exo-hydroxycamphor dehydrogenase (camD).